The sequence spans 414 residues: TAR DNA-binding protein 43 (414 aa).

RRM domains lie at 104 to 200 and 191 to 262; these read SDLI…RCTE and RKVF…NAEP. Residues 261 to 274 show a composition bias toward basic and acidic residues; it reads EPKHNSNRQLERGG. Disordered regions lie at residues 261–303 and 341–373; these read EPKH…GNNQ and ASQQ…GNNS. Residues 275–303 show a composition bias toward gly residues; it reads RFGGNPGGFGNQGGFGNSRGGGGGLGNNQ. The segment covering 342–373 has biased composition (low complexity); sequence SQQNQSGPSGNNQPQGNMQREQNQGFSSGNNS.

Homodimer.

Its subcellular location is the nucleus. It localises to the cytoplasm. The protein localises to the stress granule. It is found in the mitochondrion. In terms of biological role, probably involved in transcriptional repression. May play a role in the maintenance of the circadian clock periodicity. The chain is TAR DNA-binding protein 43 (TARDBP) from Gallus gallus (Chicken).